Reading from the N-terminus, the 122-residue chain is uncharacterized protein (122 aa).

Transmembrane regions (helical) follow at residues 9-29 and 60-80; these read VATVDAIFAISSSTFLWSTWV and LFSFTSVLTVSTFTFASCLIM.

It localises to the cytoplasm. Its subcellular location is the membrane. This is an uncharacterized protein from Schizosaccharomyces pombe (strain 972 / ATCC 24843) (Fission yeast).